Here is a 429-residue protein sequence, read N- to C-terminus: Adenylosuccinate synthetase (429 aa).

GTP contacts are provided by residues 12-18 (GDEGKGK) and 40-42 (GHT). Aspartate 13 functions as the Proton acceptor in the catalytic mechanism. Aspartate 13 and glycine 40 together coordinate Mg(2+). IMP-binding positions include 13–16 (DEGK), 38–41 (NAGH), threonine 128, arginine 142, glutamine 223, threonine 238, and arginine 302. The active-site Proton donor is the histidine 41. 298-304 (TVTGRPR) contacts substrate. GTP is bound by residues arginine 304, 330-332 (LLD), and 412-414 (SVG).

Belongs to the adenylosuccinate synthetase family. In terms of assembly, homodimer. Requires Mg(2+) as cofactor.

It is found in the cytoplasm. It carries out the reaction IMP + L-aspartate + GTP = N(6)-(1,2-dicarboxyethyl)-AMP + GDP + phosphate + 2 H(+). It participates in purine metabolism; AMP biosynthesis via de novo pathway; AMP from IMP: step 1/2. Functionally, plays an important role in the de novo pathway of purine nucleotide biosynthesis. Catalyzes the first committed step in the biosynthesis of AMP from IMP. The sequence is that of Adenylosuccinate synthetase from Lactobacillus gasseri (strain ATCC 33323 / DSM 20243 / BCRC 14619 / CIP 102991 / JCM 1131 / KCTC 3163 / NCIMB 11718 / NCTC 13722 / AM63).